A 213-amino-acid polypeptide reads, in one-letter code: Probable GTP-binding protein EngB (213 aa).

The EngB-type G domain maps to 25-203 (EGTEVAFAGR…EDVLNGWLLP (179 aa)). GTP-binding positions include 33 to 40 (GRSNAGKS), 60 to 64 (GRTQL), 80 to 83 (DLPG), 147 to 150 (TKAD), and 179 to 184 (AQMFSA). Mg(2+) is bound by residues Ser-40 and Thr-62.

The protein belongs to the TRAFAC class TrmE-Era-EngA-EngB-Septin-like GTPase superfamily. EngB GTPase family. It depends on Mg(2+) as a cofactor.

Functionally, necessary for normal cell division and for the maintenance of normal septation. In Saccharophagus degradans (strain 2-40 / ATCC 43961 / DSM 17024), this protein is Probable GTP-binding protein EngB.